The sequence spans 279 residues: Diaminopimelate epimerase (279 aa).

2 residues coordinate substrate: Asn11 and Asn72. Cys81 functions as the Proton donor in the catalytic mechanism. Substrate contacts are provided by residues 82–83, Asn187, and 205–206; these read GN and ER. Residue Cys215 is the Proton acceptor of the active site. 216–217 serves as a coordination point for substrate; the sequence is GT.

Belongs to the diaminopimelate epimerase family. Homodimer.

The protein resides in the cytoplasm. It catalyses the reaction (2S,6S)-2,6-diaminopimelate = meso-2,6-diaminopimelate. Its pathway is amino-acid biosynthesis; L-lysine biosynthesis via DAP pathway; DL-2,6-diaminopimelate from LL-2,6-diaminopimelate: step 1/1. Functionally, catalyzes the stereoinversion of LL-2,6-diaminopimelate (L,L-DAP) to meso-diaminopimelate (meso-DAP), a precursor of L-lysine and an essential component of the bacterial peptidoglycan. This chain is Diaminopimelate epimerase, found in Aquifex aeolicus (strain VF5).